We begin with the raw amino-acid sequence, 2800 residues long: Probable serine/threonine-protein kinase roco5 (2800 aa).

Positions 1–61 are enriched in basic and acidic residues; sequence MEVIKKEKKD…EKEKDKEKDG (61 aa). Disordered stretches follow at residues 1-92, 123-225, and 417-437; these read MEVI…SAQS, TTTT…SPVD, and GINS…SSGI. A compositionally biased stretch (pro residues) spans 77 to 86; it reads PTPPPPPPPS. Composition is skewed to low complexity over residues 123–134 and 143–170; these read TTTTTTTTSSNN and NNNT…SSNN. Over residues 176 to 190 the composition is skewed to polar residues; it reads INVTSLDSGGNNNAS. The span at 194-218 shows a compositional bias: basic and acidic residues; the sequence is ISNEHSPKNRKEKEKEKDKDNKEDS. The region spanning 227–508 is the DH domain; sequence NRRKLVEGFM…VQVVKDIVNE (282 aa). A compositionally biased stretch (low complexity) spans 417–429; that stretch reads GINSANSNNNNNN. The region spanning 540–649 is the PH domain; sequence KFLKEGILIE…WFQVLSQASL (110 aa). 4 LRR repeats span residues 777-800, 805-832, 834-856, and 861-885; these read NKSI…ALGD, NHSL…GILS, PSIT…HISK, and NQTL…IIDQ. Positions 926-946 are disordered; that stretch reads KQLQVNQKSTTPSTSTSTTSS. Positions 934 to 946 are enriched in low complexity; it reads STTPSTSTSTTSS. 10 LRR repeats span residues 971-984, 985-1007, 1008-1031, 1033-1056, 1058-1077, 1078-1101, 1128-1151, 1152-1174, 1175-1197, and 1199-1222; these read LNKL…SRRI, SDLK…ILKE, LKNL…ISEM, ELKL…TLCK, NHLD…SLSQ, LVNL…IFTR, AIKA…IGSI, SSLI…IGKL, SSLQ…LSQL, and TLKV…KISI. The region spanning 1244-1464 is the Roc domain; the sequence is KEKPCMRMKL…NHIVKLGKAE (221 aa). Residues 1257 to 1264, 1348 to 1352, and 1407 to 1410 contribute to the GTP site; these read GQENVGKT, DFAGQ, and THLD. The COR 1 domain maps to 1473 to 1604; it reads RSYFQLENLI…KFEIVHPLPD (132 aa). 2 disordered regions span residues 1605–1665 and 1688–1711; these read PKAT…SLLN and DQST…FSDS. Low complexity-rich tracts occupy residues 1610-1645, 1653-1665, and 1688-1707; these read SSSS…SSTT, RTNS…SLLN, and DQST…SSNN. The region spanning 1717-1790 is the COR 2 domain; it reads KSSTKHLVPI…VKEFWKNGLL (74 aa). A compositionally biased stretch (low complexity) spans 1886 to 2008; the sequence is SQQQHHQQQQ…LNPDSTSSSN (123 aa). 2 disordered regions span residues 1886-2011 and 2050-2070; these read SQQQ…NETS and RNTN…SSIV. The span at 2050-2059 shows a compositional bias: polar residues; sequence RNTNKPKING. The Protein kinase domain occupies 2175-2440; that stretch reads LEIIEKVGEG…PTFIDIHSRL (266 aa). ATP-binding positions include 2181–2189 and Lys2202; that span reads VGEGGFGIV. The Proton acceptor role is filled by Asp2300. Composition is skewed to low complexity over residues 2452 to 2490, 2583 to 2654, 2669 to 2685, and 2694 to 2704; these read TTTN…GTTS, LKTP…SPIS, TTQT…PNPT, and SSLSSNSINKP. 2 disordered regions span residues 2452-2498 and 2544-2800; these read TTTN…HPQL and AGGN…AIPK. Residues 2705–2723 are compositionally biased toward pro residues; sequence PSKPLPTPGGVTSPPPPPT. Residues 2730–2756 are compositionally biased toward polar residues; it reads IKFNSISAGNKTIGQSSTLPSSTLKQF. Positions 2757-2787 are enriched in low complexity; that stretch reads TANNNTSPSGSSSLPNSTVSSPSSSFLLRPT.

The protein belongs to the protein kinase superfamily. TKL Ser/Thr protein kinase family. ROCO subfamily.

It catalyses the reaction L-seryl-[protein] + ATP = O-phospho-L-seryl-[protein] + ADP + H(+). It carries out the reaction L-threonyl-[protein] + ATP = O-phospho-L-threonyl-[protein] + ADP + H(+). Its function is as follows. May act as a serine/threonine-protein kinase and guanine-nucleotide releasing factor. In Dictyostelium discoideum (Social amoeba), this protein is Probable serine/threonine-protein kinase roco5 (roco5).